The following is a 646-amino-acid chain: Beta-galactosidase-1-like protein (646 aa).

An N-terminal signal peptide occupies residues 1-23 (MPPDLPSLLLRLVVLLLLSQAEA). N-linked (GlcNAc...) asparagine glycosylation occurs at N93. Residue E182 is the Proton donor of the active site. N239 carries an N-linked (GlcNAc...) asparagine glycan. E260 (nucleophile) is an active-site residue.

It belongs to the glycosyl hydrolase 35 family.

It is found in the secreted. In terms of biological role, probable glycosyl hydrolase. The sequence is that of Beta-galactosidase-1-like protein (Glb1l) from Mus musculus (Mouse).